Reading from the N-terminus, the 94-residue chain is Serine protease inhibitor Kazal-type 13 (94 aa).

An N-terminal signal peptide occupies residues 1-23; sequence MAAFPHKIIFFLVCSTLTHVAFS. Positions 33–94 constitute a Kazal-like domain; that stretch reads RWPKPRCKMY…IKFEKYGKCD (62 aa). 3 disulfides stabilise this stretch: Cys39/Cys75, Cys53/Cys72, and Cys61/Cys93. An N-linked (GlcNAc...) asparagine glycan is attached at Asn55.

The protein resides in the secreted. In terms of biological role, may be a serine protease inhibitor. Essential for sperm maturation and fertility. Inhibits sperm acrosome reaction, protecting sperm from premature reaction. The polypeptide is Serine protease inhibitor Kazal-type 13 (SPINK13) (Homo sapiens (Human)).